Consider the following 234-residue polypeptide: Sugar fermentation stimulation protein A (234 aa).

The H-T-H motif DNA-binding region spans 201–220 (LLSEAQNKGVEVLAYKAELS).

This sequence belongs to the SfsA family.

Binds to DNA non-specifically. Could be a regulatory factor involved in maltose metabolism. In Salmonella typhi, this protein is Sugar fermentation stimulation protein A.